We begin with the raw amino-acid sequence, 370 residues long: Aminomethyltransferase (370 aa).

Belongs to the GcvT family. The glycine cleavage system is composed of four proteins: P, T, L and H.

The catalysed reaction is N(6)-[(R)-S(8)-aminomethyldihydrolipoyl]-L-lysyl-[protein] + (6S)-5,6,7,8-tetrahydrofolate = N(6)-[(R)-dihydrolipoyl]-L-lysyl-[protein] + (6R)-5,10-methylene-5,6,7,8-tetrahydrofolate + NH4(+). The glycine cleavage system catalyzes the degradation of glycine. The polypeptide is Aminomethyltransferase (Clostridium botulinum (strain ATCC 19397 / Type A)).